Consider the following 480-residue polypeptide: Ochratoxinase (480 aa).

Residues His111, His113, Lys246, His287, and His307 each coordinate Zn(2+). Lys246 is an active-site residue. Asp378 is an active-site residue.

Belongs to the metallo-dependent hydrolases superfamily. Ochratoxinase amidase 2 family. As to quaternary structure, homooctamer. Zn(2+) is required as a cofactor.

It localises to the secreted. It carries out the reaction ochratoxin A + H2O = ochratoxin alpha + L-phenylalanine. The Zn(2+)-specific chelator 1,10-phenanthroline inhibits the enzyme activity. Carboxypeptidase that catalyzes the release of a C-terminal amino acid with specific catalytic activity for aromatic amino acids such as phenylalanine. Is able to degrade ochratoxin A, one of the five major mycotoxins most harmful to humans and animals that is produced by Aspergillus and Penicillium species and occurs in a wide range of agricultural products. The sequence is that of Ochratoxinase from Aspergillus niger (strain ATCC 1015 / CBS 113.46 / FGSC A1144 / LSHB Ac4 / NCTC 3858a / NRRL 328 / USDA 3528.7).